Reading from the N-terminus, the 554-residue chain is Solute carrier family 22 member 1 (554 aa).

The Cytoplasmic segment spans residues 1–21 (MPTVDDILEQVGESGWFQKQA). Residues 22–42 (FLILCLLSAAFAPICVGIVFL) form a helical membrane-spanning segment. The Extracellular segment spans residues 43–149 (GFTPDHHCQS…LVCADSWKLD (107 aa)). N71 is a glycosylation site (N-linked (GlcNAc...) asparagine). Residues 150 to 170 (LFQSCLNAGFLFGSLGVGYFA) form a helical membrane-spanning segment. At 171 to 176 (DRFGRK) the chain is on the cytoplasmic side. The helical transmembrane segment at 177-197 (LCLLGTVLVNAVSGVLMAFSP) threads the bilayer. Residues 198 to 206 (NYMSMLLFR) lie on the Extracellular side of the membrane. Residues 207–229 (LLQGLVSKGNWMAGYTLITEFVG) form a helical membrane-spanning segment. The Cytoplasmic portion of the chain corresponds to 230–235 (SGSRRT). Residues 236–256 (VAIMYQMAFTVGLVALTGLAY) form a helical membrane-spanning segment. The Extracellular segment spans residues 257-262 (ALPHWR). Residues 263-283 (WLQLAVSLPTFLFLLYYWCVP) form a helical membrane-spanning segment. A Proline-rich sequence motif is present at residues 283–287 (PESPR). Residues 284 to 347 (ESPRWLLSQK…FRTPRLRKRT (64 aa)) lie on the Cytoplasmic side of the membrane. S333 bears the Phosphoserine mark. A helical membrane pass occupies residues 348 to 368 (FILMYLWFTDSVLYQGLILHM). Residues 369 to 376 (GATSGNLY) lie on the Extracellular side of the membrane. Residues 377-397 (LDFLYSALVEIPGAFIALITI) traverse the membrane as a helical segment. Over 398-402 (DRVGR) the chain is Cytoplasmic. The chain crosses the membrane as a helical span at residues 403-423 (IYPMAMSNLLAGAACLVMIFI). At 424-431 (SPDLHWLN) the chain is on the extracellular side. A helical membrane pass occupies residues 432–452 (IIIMCVGRMGITIAIQMICLV). The Cytoplasmic segment spans residues 453 to 464 (NAELYPTFVRNL). Residues 465 to 485 (GVMVCSSLCDIGGIITPFIVF) traverse the membrane as a helical segment. At 486–492 (RLREVWQ) the chain is on the extracellular side. The helical transmembrane segment at 493–513 (ALPLILFAVLGLLAAGVTLLL) threads the bilayer. Topologically, residues 514–554 (PETKGVALPETMKDAENLGRKAKPKENTIYLKVQTSEPSGT) are cytoplasmic. T541 is modified (phosphothreonine).

The protein belongs to the major facilitator (TC 2.A.1) superfamily. Organic cation transporter (TC 2.A.1.19) family. Post-translationally, phosphorylated. Widely expressed with high level in liver. In liver, expressed around the central vein. Expressed in kidney. Expressed in small intestine enterocytes. Localized to peritubular myoid cells, Leydig cells and moderately to the basal membrane of Sertoli cells in testes. Expressed in tracheal and bronchial ciliated epithelium in the respiratory tract. Also expressed in skeletal muscle, stomach, spleen, heart, placentacolon, brain, granulycytes and lympohocytes. As to expression, expressed in liver and in glial cell lines. In terms of tissue distribution, expressed in glial cell lines. Not expressed in liver.

Its subcellular location is the basolateral cell membrane. It localises to the apical cell membrane. It is found in the lateral cell membrane. The protein resides in the basal cell membrane. The protein localises to the cell membrane. It carries out the reaction 1-methylnicotinamide(out) = 1-methylnicotinamide(in). The catalysed reaction is dopamine(out) = dopamine(in). It catalyses the reaction serotonin(out) = serotonin(in). The enzyme catalyses (R)-adrenaline(out) = (R)-adrenaline(in). It carries out the reaction histamine(out) = histamine(in). The catalysed reaction is guanidine(out) = guanidine(in). It catalyses the reaction acetylcholine(in) = acetylcholine(out). The enzyme catalyses thiamine(in) = thiamine(out). It carries out the reaction agmatine(out) = agmatine(in). The catalysed reaction is putrescine(out) = putrescine(in). It catalyses the reaction spermidine(in) = spermidine(out). The enzyme catalyses L-histidyl-L-proline diketopiperazine(in) = L-histidyl-L-proline diketopiperazine(out). It carries out the reaction (R)-salsolinol(in) = (R)-salsolinol(out). The catalysed reaction is prostaglandin F2alpha(out) = prostaglandin F2alpha(in). It catalyses the reaction prostaglandin E2(out) = prostaglandin E2(in). With respect to regulation, phosphorylation of the transporter leads to changes in its substrate affinity, resulting in a regulation of the transport activity. In contrast with rat ortholog, ASP uptake is inhibited by protein kinase A (PKA) and C (PKC) activation. ASP uptake is also endogenously activated by calmodulin, the calmodulin-dependent kinase II and LCK tyrosine kinase. Inhibited by cGMP, most likely through a cGMP-binding protein that interacts with OCT1. Electrogenic voltage-dependent transporter that mediates the transport of a variety of organic cations such as endogenous bioactive amines, cationic drugs and xenobiotics. Functions as a pH- and Na(+)-independent, bidirectional transporter. Cation cellular uptake or release is driven by the electrochemical potential (i.e. membrane potential and concentration gradient) and substrate selectivity. Hydrophobicity is a major requirement for recognition in polyvalent substrates and inhibitors. Primarily expressed at the basolateral membrane of hepatocytes and proximal tubules and involved in the uptake and disposition of cationic compounds by hepatic and renal clearance from the blood flow. Most likely functions as an uptake carrier in enterocytes contributing to the intestinal elimination of organic cations from the systemic circulation. Transports endogenous monoamines such as N-1-methylnicotinamide (NMN), guanidine, histamine, neurotransmitters dopamine, serotonin and adrenaline. Also transports natural polyamines such as spermidine, agmatine and putrescine at low affinity, but relatively high turnover. Involved in the hepatic uptake of vitamin B1/thiamine, hence regulating hepatic lipid and energy metabolism. Mediates the bidirectional transport of acetylcholine (ACh) at the apical membrane of ciliated cell in airway epithelium, thereby playing a role in luminal release of ACh from bronchial epithelium. Transports dopaminergic neuromodulators cyclo(his-pro) and salsolinol with lower efficency. Also capable of transporting non-amine endogenous compounds such as prostaglandin E2 (PGE2) and prostaglandin F2-alpha (PGF2-alpha). May contribute to the transport of cationic compounds in testes across the blood-testis-barrier. Also involved in the uptake of xenobiotics tributylmethylammonium (TBuMA), quinidine, N-methyl-quinine (NMQ), N-methyl-quinidine (NMQD) N-(4,4-azo-n-pentyl)-quinuclidine (APQ), azidoprocainamide methoiodide (AMP), N-(4,4-azo-n-pentyl)-21-deoxyajmalinium (APDA) and 4-(4-(dimethylamino)styryl)-N-methylpyridinium (ASP). Functionally, mediates the uptake of 1-methyl-4-phenylpyridinium (MPP(+)). In terms of biological role, not able to uptake 1-methyl-4-phenylpyridinium (MPP(+)). This is Solute carrier family 22 member 1 from Homo sapiens (Human).